A 179-amino-acid polypeptide reads, in one-letter code: MSTPARRRLMRDFKRMQQDPPSGVSASPLPDNVMKWNAVIIGPSDTPFEDGTFRLLLSFDEQYPNKPPQVKFISEMFHPNVYASGELCLDILQNRWSPTYDVSSILTSVQSLLNDPNISSPANVEAANLYKDHRSLYVKRVRETVENSWNDDDDEEEEEEDEDEAEDEDDDDDDNIDED.

The interval 1–28 is disordered; sequence MSTPARRRLMRDFKRMQQDPPSGVSASP. The 147-residue stretch at 4–150 folds into the UBC core domain; sequence PARRRLMRDF…VRETVENSWN (147 aa). Cys-88 (glycyl thioester intermediate) is an active-site residue. The interval 145 to 179 is disordered; sequence VENSWNDDDDEEEEEEDEDEAEDEDDDDDDNIDED. Acidic residues predominate over residues 149–179; it reads WNDDDDEEEEEEDEDEAEDEDDDDDDNIDED. The tract at residues 151-179 is acidic tail; it reads DDDDEEEEEEDEDEAEDEDDDDDDNIDED.

It belongs to the ubiquitin-conjugating enzyme family.

The protein localises to the cytoplasm. The protein resides in the nucleus. The catalysed reaction is S-ubiquitinyl-[E1 ubiquitin-activating enzyme]-L-cysteine + [E2 ubiquitin-conjugating enzyme]-L-cysteine = [E1 ubiquitin-activating enzyme]-L-cysteine + S-ubiquitinyl-[E2 ubiquitin-conjugating enzyme]-L-cysteine.. It functions in the pathway protein modification; protein ubiquitination. Catalyzes the covalent attachment of ubiquitin to other proteins. Plays a role in transcription regulation by catalyzing the monoubiquitination of histone H2B to form H2BK123ub1. H2BK123ub1 gives a specific tag for epigenetic transcriptional activation and is also a prerequisite for H3K4me and H3K79me formation. Also involved in postreplication repair of UV-damaged DNA, in N-end rule-dependent protein degradation and in sporulation. This is Ubiquitin-conjugating enzyme E2 2 (UBC2) from Candida albicans (strain SC5314 / ATCC MYA-2876) (Yeast).